A 253-amino-acid chain; its full sequence is Probable transcriptional regulatory protein Tpet_0454 (253 aa).

The protein belongs to the TACO1 family.

The protein localises to the cytoplasm. The protein is Probable transcriptional regulatory protein Tpet_0454 of Thermotoga petrophila (strain ATCC BAA-488 / DSM 13995 / JCM 10881 / RKU-1).